The sequence spans 71 residues: Omega-conotoxin-like CnVIIF (71 aa).

Cystine bridges form between cysteine 46/cysteine 61, cysteine 53/cysteine 65, and cysteine 60/cysteine 70. Cysteine 70 carries the cysteine amide; in CnVIID modification.

The protein belongs to the conotoxin M superfamily. As to expression, expressed by the venom duct.

It localises to the secreted. Omega-conotoxins act at presynaptic membranes, they bind and block voltage-gated calcium channels (Cav). This Conus consors (Singed cone) protein is Omega-conotoxin-like CnVIIF.